Here is a 511-residue protein sequence, read N- to C-terminus: Maturase K (511 aa).

Belongs to the intron maturase 2 family. MatK subfamily.

The protein resides in the plastid. Its subcellular location is the chloroplast. In terms of biological role, usually encoded in the trnK tRNA gene intron. Probably assists in splicing its own and other chloroplast group II introns. The polypeptide is Maturase K (Campsis radicans (Trumpet creeper)).